The following is a 205-amino-acid chain: Microtubule-associated protein Jupiter (205 aa).

Residue Ser-30 is modified to Phosphoserine. Residues Thr-41, Thr-98, and Thr-102 each carry the phosphothreonine modification. The segment covering 124 to 135 (LISNSKGNYNGK) has biased composition (polar residues). A disordered region spans residues 124–205 (LISNSKGNYN…PPGGYSSGLW (82 aa)). Residues 136 to 149 (SGSVSSASSSVSSS) show a composition bias toward low complexity. 2 positions are modified to phosphoserine: Ser-138 and Ser-149. Residues 181–191 (PANNGSSQVIN) are compositionally biased toward polar residues.

The protein belongs to the MAP Jupiter family.

Its subcellular location is the nucleus. It is found in the cytoplasm. The protein resides in the cytoskeleton. The protein localises to the spindle. Its function is as follows. Binds to all microtubule populations. The polypeptide is Microtubule-associated protein Jupiter (Drosophila virilis (Fruit fly)).